Reading from the N-terminus, the 373-residue chain is Erythronate-4-phosphate dehydrogenase (373 aa).

Substrate is bound by residues S45 and T67. Residues D147, 206-208 (ASR), and D232 each bind NAD(+). Residue R208 is part of the active site. E237 is a catalytic residue. Residue H254 is the Proton donor of the active site. G257 serves as a coordination point for NAD(+). Y258 serves as a coordination point for substrate.

Belongs to the D-isomer specific 2-hydroxyacid dehydrogenase family. PdxB subfamily. As to quaternary structure, homodimer.

It localises to the cytoplasm. The catalysed reaction is 4-phospho-D-erythronate + NAD(+) = (R)-3-hydroxy-2-oxo-4-phosphooxybutanoate + NADH + H(+). It participates in cofactor biosynthesis; pyridoxine 5'-phosphate biosynthesis; pyridoxine 5'-phosphate from D-erythrose 4-phosphate: step 2/5. Functionally, catalyzes the oxidation of erythronate-4-phosphate to 3-hydroxy-2-oxo-4-phosphonooxybutanoate. In Tolumonas auensis (strain DSM 9187 / NBRC 110442 / TA 4), this protein is Erythronate-4-phosphate dehydrogenase.